The following is a 349-amino-acid chain: Protein disulfide isomerase Creld2 (349 aa).

A signal peptide spans Met-1–Ser-22. The CXXC signature appears at Cys-28 to Cys-31. 4 cysteine pairs are disulfide-bonded: Cys-28–Cys-31, Cys-137–Cys-151, Cys-145–Cys-163, and Cys-165–Cys-174. The EGF-like 1 domain occupies Asp-133–Ile-175. Asn-187 carries N-linked (GlcNAc...) asparagine glycosylation. Residues His-190–Pro-237 form an FU 1 repeat. A glycan (N-linked (GlcNAc...) asparagine) is linked at Asn-248. An FU 2 repeat occupies Ser-250 to Ala-297. The CXXC motif lies at Cys-260–Cys-263. Disulfide bonds link Cys-260/Cys-263, Cys-291/Cys-305, Cys-298/Cys-314, and Cys-316/Cys-327. The region spanning Asp-287 to Val-328 is the EGF-like 2; calcium-binding domain.

This sequence belongs to the CRELD family. In terms of assembly, interacts with Chrna4. Component of a complex containing at least Creld2, Manf, Matn3 and Pdia4. Broadly expressed in brain (at protein level).

The protein localises to the endoplasmic reticulum. The enzyme catalyses Catalyzes the rearrangement of -S-S- bonds in proteins.. Its function is as follows. Protein disulfide isomerase. Might play a role in the unfolded protein response. May regulate transport of alpha4-beta2 neuronal acetylcholine receptor. This chain is Protein disulfide isomerase Creld2 (Creld2), found in Rattus norvegicus (Rat).